Here is a 152-residue protein sequence, read N- to C-terminus: uncharacterized protein (152 aa).

An N-linked (GlcNAc...) asparagine; by host glycan is attached at Asn-2. Transmembrane regions (helical) follow at residues 5–25, 36–56, and 68–88; these read MILL…MNLW, LNDF…CYIL, and LIIT…QAFI. An N-linked (GlcNAc...) asparagine; by host glycan is attached at Asn-113.

The protein resides in the membrane. This is an uncharacterized protein from Acanthamoeba polyphaga mimivirus (APMV).